Reading from the N-terminus, the 156-residue chain is Protein E6 (156 aa).

Zinc fingers lie at residues Cys-42–Cys-78 and Cys-115–Cys-151.

It belongs to the papillomaviridae E6 protein family. As to quaternary structure, forms homodimers. Interacts with ubiquitin-protein ligase UBE3A/E6-AP; this interaction stimulates UBE3A ubiquitin activity. Interacts with host BAK1.

The protein localises to the host cytoplasm. It localises to the host nucleus. Its function is as follows. Plays a major role in the induction and maintenance of cellular transformation. E6 associates with host UBE3A/E6-AP ubiquitin-protein ligase and modulates its activity. Protects host keratinocytes from apoptosis by mediating the degradation of host BAK1. May also inhibit host immune response. The chain is Protein E6 from Homo sapiens (Human).